A 625-amino-acid polypeptide reads, in one-letter code: Sphingomyelin phosphodiesterase (625 aa).

The disordered stretch occupies residues 1–20; sequence MPRHGVSPGQGLPRSGREQA. The N-terminal stretch at 1–40 is a signal peptide; it reads MPRHGVSPGQGLPRSGREQASDRSLGAPCLRLLWLGLALA. Residues 81-165 form the Saposin B-type domain; it reads WNLTCPTCKG…LLGSSCGHWD (85 aa). The N-linked (GlcNAc...) asparagine glycan is linked to asparagine 82. 3 disulfides stabilise this stretch: cysteine 85/cysteine 161, cysteine 88/cysteine 153, and cysteine 116/cysteine 127. N-linked (GlcNAc...) asparagine glycosylation occurs at asparagine 171. Residues aspartate 202 and histidine 204 each coordinate Zn(2+). Cystine bridges form between cysteine 217/cysteine 222 and cysteine 223/cysteine 246. Zn(2+)-binding residues include aspartate 274 and asparagine 314. N-linked (GlcNAc...) asparagine glycans are attached at residues asparagine 331 and asparagine 391. Residues cysteine 381 and cysteine 427 are joined by a disulfide bond. 3 residues coordinate Zn(2+): histidine 421, histidine 453, and histidine 455. Asparagine 499 is a glycosylation site (N-linked (GlcNAc...) asparagine). The residue at position 504 (serine 504) is a Phosphoserine. The N-linked (GlcNAc...) asparagine glycan is linked to asparagine 516. 2 disulfide bridges follow: cysteine 580–cysteine 584 and cysteine 590–cysteine 603.

It belongs to the acid sphingomyelinase family. As to quaternary structure, monomer. Interacts with SORT1; the interaction is required for SMPD1 targeting to lysosomes. Requires Zn(2+) as cofactor. Post-translationally, proteolytically processed. Mature lysosomal form arises from C-terminal proteolytic processing of pro-sphingomyelin phosphodiesterase. Both lysosomal and secreted forms are glycosylated but they show a differential pattern of glycosylation. In terms of processing, phosphorylated at Ser-504 by PRKCD upon stress stimuli. Phosphorylation is required for secretion. Post-translationally, this form is generated following cleavage by CASP7 in the extracellular milieu. It shows increased activity.

It localises to the lysosome. The protein localises to the lipid droplet. The protein resides in the secreted. Its subcellular location is the extracellular space. It catalyses the reaction a sphingomyelin + H2O = phosphocholine + an N-acylsphing-4-enine + H(+). The catalysed reaction is N-(octadecanoyl)-sphing-4-enine-1-phosphocholine + H2O = N-octadecanoylsphing-4-enine + phosphocholine + H(+). It carries out the reaction a 1,2-diacyl-sn-glycero-3-phosphocholine + H2O = phosphocholine + a 1,2-diacyl-sn-glycerol + H(+). The enzyme catalyses 1,2-dihexadecanoyl-sn-glycero-3-phosphocholine + H2O = 1,2-dihexadecanoyl-sn-glycerol + phosphocholine + H(+). Its activity is regulated as follows. Hydrolysis of liposomal sphingomyelin is stimulated by incorporation of diacylglycerol (DAG), ceramide and free fatty acids into the liposomal membranes. Phosphatidylcholine hydrolysis is inhibited by incorporation of cholesterol, ceramide, DAG, monoacylglycerol and fatty acids. In terms of biological role, converts sphingomyelin to ceramide. Exists as two enzymatic forms that arise from alternative trafficking of a single protein precursor, one that is targeted to the endolysosomal compartment, whereas the other is released extracellularly. However, in response to various forms of stress, lysosomal exocytosis may represent a major source of the secretory form. In the lysosomes, converts sphingomyelin to ceramide. Plays an important role in the export of cholesterol from the intraendolysosomal membranes. Also has phospholipase C activities toward 1,2-diacylglycerolphosphocholine and 1,2-diacylglycerolphosphoglycerol. Modulates stress-induced apoptosis through the production of ceramide. Functionally, when secreted, modulates cell signaling with its ability to reorganize the plasma membrane by converting sphingomyelin to ceramide. Secreted form is increased in response to stress and inflammatory mediators such as IL1B, IFNG or TNF as well as upon infection with bacteria and viruses. Produces the release of ceramide in the outer leaflet of the plasma membrane playing a central role in host defense. Ceramide reorganizes these rafts into larger signaling platforms that are required to internalize bacteria, induce apoptosis and regulate the cytokine response in infected cells. In wounded cells, the lysosomal form is released extracellularly in the presence of Ca(2+) and promotes endocytosis and plasma membrane repair. Its function is as follows. This form is generated following cleavage by CASP7 in the extracellular milieu in response to bacterial infection. It shows increased ability to convert sphingomyelin to ceramide and promotes plasma membrane repair. Plasma membrane repair by ceramide counteracts the action of gasdermin-D (GSDMD) perforin (PRF1) pores that are formed in response to bacterial infection. This Bos taurus (Bovine) protein is Sphingomyelin phosphodiesterase (SMPD1).